Here is a 135-residue protein sequence, read N- to C-terminus: Small ribosomal subunit protein bS6 (135 aa).

The interval 96 to 135 (HAEGPSIQMQKRDERERGDRGDRSDRGDRGDRGDRGGFRR) is disordered. Residues 105 to 135 (QKRDERERGDRGDRSDRGDRGDRGDRGGFRR) are compositionally biased toward basic and acidic residues.

It belongs to the bacterial ribosomal protein bS6 family.

Binds together with bS18 to 16S ribosomal RNA. This is Small ribosomal subunit protein bS6 from Cereibacter sphaeroides (strain ATCC 17029 / ATH 2.4.9) (Rhodobacter sphaeroides).